Reading from the N-terminus, the 405-residue chain is MRFIDEAVVTVKAGDGGNGIASFRREKYVPRGGPDGGDGGKGGDVYVIAEDNTNTLVDYRYTRRHDAMRAENGHSRNCSGKGSDDLFLPVPIGTTVVDTETDEVLGDLIEIGQTLLIAKGGDGGLGNTHFKSSTNQAPRKATSGFEGELKVLKFELKVVADVGLIGLPNAGKSTFIRQVSAARPKVADYPFTTLVPNLGVVDIGRHRSFVMADIPGLIEGASEGAGLGIRFLKHVARTRRLLHLVDIKPIDGSDPVENARVILNELERFSPELANLPQILVLNKIDQVPEEELNELCTHIVAELGWTGIVFRTATLTGEGVDAIKYHLMNEIEREREREIEDPIFADAQKARFERLEAEVRLNTEAQREAYRAARKAAREGTDLSDDDFDDSDDDDDGVEVVYAP.

The Obg domain maps to Met1 to Val159. The OBG-type G domain occupies Ala160–Glu333. GTP-binding positions include Gly166–Ser173, Phe191–Val195, Asp213–Gly216, Asn283–Asp286, and Ala314–Leu316. Mg(2+) is bound by residues Ser173 and Thr193. The span at Tyr371–Thr382 shows a compositional bias: basic and acidic residues. The interval Tyr371–Pro405 is disordered. A compositionally biased stretch (acidic residues) spans Asp383 to Val399.

It belongs to the TRAFAC class OBG-HflX-like GTPase superfamily. OBG GTPase family. As to quaternary structure, monomer. The cofactor is Mg(2+).

Its subcellular location is the cytoplasm. An essential GTPase which binds GTP, GDP and possibly (p)ppGpp with moderate affinity, with high nucleotide exchange rates and a fairly low GTP hydrolysis rate. Plays a role in control of the cell cycle, stress response, ribosome biogenesis and in those bacteria that undergo differentiation, in morphogenesis control. This Psychrobacter cryohalolentis (strain ATCC BAA-1226 / DSM 17306 / VKM B-2378 / K5) protein is GTPase Obg.